The chain runs to 220 residues: V-set and transmembrane domain-containing protein 2-like protein (220 aa).

An N-terminal signal peptide occupies residues 1–24; that stretch reads MGAPLAAALGALHYLALFLQLGGA. An Ig-like domain is found at 41-158; that stretch reads ALFTETPHDM…DGGRGVPRVL (118 aa). Residues Cys-62 and Cys-142 are joined by a disulfide bond. Pro residues predominate over residues 165–180; it reads PAPPRAPRPRGQPPGE. Residues 165 to 220 form a disordered region; the sequence is PAPPRAPRPRGQPPGEEPGRGPTLLFLIILPGTGSGTPREAEPHQPHAGGCPARQS.

In Mus musculus (Mouse), this protein is V-set and transmembrane domain-containing protein 2-like protein (Vstm2l).